Consider the following 145-residue polypeptide: Hemoglobin fetal subunit beta (145 aa).

Residues 1–145 (MLSAEEKASV…VANALAHRYH (145 aa)) enclose the Globin domain. Heme b is bound by residues His-62 and His-91.

It belongs to the globin family. In terms of assembly, heterotetramer of two alpha chains and two beta chains. As to expression, red blood cells.

Its function is as follows. Involved in oxygen transport from the lung to the various peripheral tissues. This is Hemoglobin fetal subunit beta from Capra hircus (Goat).